Consider the following 125-residue polypeptide: Fluoride-specific ion channel FluC (125 aa).

4 helical membrane passes run 5-25 (ILAI…LALW), 37-57 (LAAN…FHLL), 71-91 (GFLG…TMLL), and 97-117 (VALL…WLGI). Na(+) is bound by residues glycine 74 and threonine 77.

It belongs to the fluoride channel Fluc/FEX (TC 1.A.43) family.

It localises to the cell inner membrane. It catalyses the reaction fluoride(in) = fluoride(out). Its activity is regulated as follows. Na(+) is not transported, but it plays an essential structural role and its presence is essential for fluoride channel function. Functionally, fluoride-specific ion channel. Important for reducing fluoride concentration in the cell, thus reducing its toxicity. This is Fluoride-specific ion channel FluC from Variovorax paradoxus (strain S110).